Reading from the N-terminus, the 215-residue chain is Probable nicotinate-nucleotide adenylyltransferase (215 aa).

This sequence belongs to the NadD family.

It catalyses the reaction nicotinate beta-D-ribonucleotide + ATP + H(+) = deamido-NAD(+) + diphosphate. It functions in the pathway cofactor biosynthesis; NAD(+) biosynthesis; deamido-NAD(+) from nicotinate D-ribonucleotide: step 1/1. Functionally, catalyzes the reversible adenylation of nicotinate mononucleotide (NaMN) to nicotinic acid adenine dinucleotide (NaAD). The sequence is that of Probable nicotinate-nucleotide adenylyltransferase from Shewanella putrefaciens (strain CN-32 / ATCC BAA-453).